An 860-amino-acid chain; its full sequence is DNA mismatch repair protein MutS (860 aa).

607 to 614 (GPNMSGKS) is an ATP binding site.

It belongs to the DNA mismatch repair MutS family.

Functionally, this protein is involved in the repair of mismatches in DNA. It is possible that it carries out the mismatch recognition step. This protein has a weak ATPase activity. The polypeptide is DNA mismatch repair protein MutS (Listeria monocytogenes serotype 4a (strain HCC23)).